Consider the following 679-residue polypeptide: Stress-70 protein, mitochondrial (679 aa).

The N-terminal 46 residues, 1–46 (MISASRAAAARLVGTAASRSPAAARPQDGWNGLSHEAFRFVSRRDY), are a transit peptide targeting the mitochondrion. The interaction with NFS1 stretch occupies residues 1–432 (MISASRAAAA…IQGGVLAGDV (432 aa)). Residues Thr-63 and Asn-64 each contribute to the ADP site. The nucleotide-binding domain (NBD) stretch occupies residues 63–431 (TNSCVAVMEG…AIQGGVLAGD (369 aa)). Lys-76 is modified (N6-acetyllysine). Position 87 is a phosphothreonine (Thr-87). 2 positions are modified to N6-acetyllysine; alternate: Lys-135 and Lys-138. N6-succinyllysine; alternate is present on residues Lys-135 and Lys-138. Lys-143 bears the N6-acetyllysine mark. Residue Lys-206 is modified to N6-acetyllysine; alternate. Lys-206 bears the N6-succinyllysine; alternate mark. Lys-206 carries the N6-malonyllysine; alternate modification. N6-acetyllysine is present on residues Lys-234 and Lys-288. Lys-300 bears the N6-acetyllysine; alternate mark. An N6-succinyllysine; alternate modification is found at Lys-300. ADP is bound by residues Glu-313, Lys-316, and Ser-320. At Lys-360 the chain carries N6-acetyllysine; alternate. At Lys-360 the chain carries N6-succinyllysine; alternate. N6-succinyllysine is present on Lys-368. The ADP site is built by Gly-388 and Arg-391. Position 394 is an N6-succinyllysine (Lys-394). Residue Ser-408 is modified to Phosphoserine. Residues 432–441 (VTDVLLLDVT) form an interdomain linker region. Residues 432 to 679 (VTDVLLLDVT…QKEDQKEEKQ (248 aa)) form an interaction with FXN and ISCU region. Residues 442 to 679 (PLSLGIETLG…QKEDQKEEKQ (238 aa)) are substrate-binding domain (SBD). Arg-513 carries the post-translational modification Omega-N-methylarginine. 2 positions are modified to N6-acetyllysine; alternate: Lys-567 and Lys-600. Residues Lys-567 and Lys-600 each carry the N6-succinyllysine; alternate modification. The residue at position 610 (Lys-610) is an N6-succinyllysine. Lys-612 carries the N6-acetyllysine modification. Lys-646 is subject to N6-acetyllysine; alternate. Position 646 is an N6-succinyllysine; alternate (Lys-646). Positions 656 to 679 (ASEREGSGSSGTGEQKEDQKEEKQ) are disordered. A compositionally biased stretch (basic and acidic residues) spans 669-679 (EQKEDQKEEKQ).

This sequence belongs to the heat shock protein 70 family. As to quaternary structure, interacts strongly with the intermediate form of FXN and weakly with its mature form. Interacts with HSCB. Associates with the mitochondrial contact site and cristae organizing system (MICOS) complex, composed of at least MICOS10/MIC10, CHCHD3/MIC19, CHCHD6/MIC25, APOOL/MIC27, IMMT/MIC60, APOO/MIC23/MIC26 and QIL1/MIC13. This complex was also known under the names MINOS or MitOS complex. The MICOS complex associates with mitochondrial outer membrane proteins SAMM50, MTX1, MTX2 and DNAJC11, mitochondrial inner membrane protein TMEM11 and with HSPA9. Interacts with DNLZ, the interaction is required to prevent self-aggregation. Interacts with TESPA1. Interacts with PDPN. Interacts with NFU1, NFS1 and ISCU. Interacts with TP53; the interaction promotes TP53 degradation. Interacts (via SBD domain) with UBXN2A; the interaction with UBXN2A inhibits HSPA9/MOT-2 interaction with and degradation of TP53, thereby promotes TP53 translocation to the nucleus. Interacts with ITPR1 AND VDAC1; this interaction couples ITPR1 to VDAC1. Component of the TIM23 mitochondrial inner membrane pre-sequence translocase complex.

Its subcellular location is the mitochondrion. It localises to the nucleus. It is found in the nucleolus. The protein resides in the cytoplasm. The protein localises to the mitochondrion matrix. The enzyme catalyses ATP + H2O = ADP + phosphate + H(+). Its activity is regulated as follows. The chaperone activity is regulated by ATP-induced allosteric coupling of the nucleotide-binding (NBD) and substrate-binding (SBD) domains. ATP binding in the NBD leads to a conformational change in the NBD, which is transferred through the interdomain linker (IDL) to the substrate-binding domain (SBD). This elicits a reduced substrate affinity and a faster substrate exchange rate. Upon hydrolysis of ATP to ADP, the protein undergoes a conformational change that increases its affinity for substrate proteins. It cycles through repeated phases of ATP hydrolysis and nucleotide exchange, facilitating repeated cycles of substrate binding and release. Functions in collaboration with co-chaperones. Functions with the co-chaperone, DNLZ, to maintain solubility and regulate ATP hydrolysis. Nucleotide exchange factors, GRPEL1 and GRPEL2, accelerate nucleotide exchange. Mitochondrial chaperone that plays a key role in mitochondrial protein import, folding, and assembly. Plays an essential role in the protein quality control system, the correct folding of proteins, the re-folding of misfolded proteins, and the targeting of proteins for subsequent degradation. These processes are achieved through cycles of ATP binding, ATP hydrolysis, and ADP release, mediated by co-chaperones. In mitochondria, it associates with the TIM (translocase of the inner membrane) protein complex to assist in the import and folding of mitochondrial proteins. Plays an important role in mitochondrial iron-sulfur cluster (ISC) biogenesis. Interacts with and stabilizes ISC cluster assembly proteins FXN, NFU1, NFS1 and ISCU. Regulates erythropoiesis via stabilization of ISC assembly. Regulates mitochondrial calcium-dependent apoptosis by coupling two calcium channels, ITPR1 and VDAC1, at the mitochondria-associated endoplasmic reticulum (ER) membrane to facilitate calcium transport from the ER lumen to the mitochondria intermembrane space, providing calcium for the downstream calcium channel MCU, which releases it into the mitochondrial matrix. Although primarily located in the mitochondria, it is also found in other cellular compartments. In the cytosol, it associates with proteins involved in signaling, apoptosis, or senescence. It may play a role in cell cycle regulation via its interaction with and promotion of degradation of TP53. May play a role in the control of cell proliferation and cellular aging. Protects against reactive oxygen species (ROS). Extracellular HSPA9 plays a cytoprotective role by preventing cell lysis following immune attack by the membrane attack complex by disrupting formation of the complex. The protein is Stress-70 protein, mitochondrial of Mus musculus (Mouse).